A 597-amino-acid chain; its full sequence is NADH-quinone oxidoreductase subunit C/D (597 aa).

Residues 1-188 form an NADH dehydrogenase I subunit C region; that stretch reads MKKEIKRDDV…DPYVLNKYKE (188 aa). Positions 211-597 are NADH dehydrogenase I subunit D; the sequence is KYMFLNLGPN…IDFVMSDVDR (387 aa).

This sequence in the N-terminal section; belongs to the complex I 30 kDa subunit family. The protein in the C-terminal section; belongs to the complex I 49 kDa subunit family. As to quaternary structure, NDH-1 is composed of 13 different subunits. Subunits NuoB, CD, E, F, and G constitute the peripheral sector of the complex.

Its subcellular location is the cell inner membrane. The enzyme catalyses a quinone + NADH + 5 H(+)(in) = a quinol + NAD(+) + 4 H(+)(out). In terms of biological role, NDH-1 shuttles electrons from NADH, via FMN and iron-sulfur (Fe-S) centers, to quinones in the respiratory chain. The immediate electron acceptor for the enzyme in this species is believed to be ubiquinone. Couples the redox reaction to proton translocation (for every two electrons transferred, four hydrogen ions are translocated across the cytoplasmic membrane), and thus conserves the redox energy in a proton gradient. This chain is NADH-quinone oxidoreductase subunit C/D, found in Buchnera aphidicola subsp. Baizongia pistaciae (strain Bp).